The following is a 91-amino-acid chain: Non-specific lipid-transfer protein 1 (91 aa).

Cystine bridges form between Cys-3/Cys-50, Cys-13/Cys-27, Cys-28/Cys-73, and Cys-48/Cys-87.

Belongs to the plant LTP family.

Plant non-specific lipid-transfer proteins transfer phospholipids as well as galactolipids across membranes. May play a role in wax or cutin deposition in the cell walls of expanding epidermal cells and certain secretory tissues. In Prunus persica (Peach), this protein is Non-specific lipid-transfer protein 1.